Reading from the N-terminus, the 895-residue chain is MFRSILTKIFGSRNDRILRRLNKIVIKINQLEPEFEALSDDDLKAKTDAFKARLAQGETLEQLLPEAFATVREASKRVLGMRHFDVQLLGGMVLTNRCIAEMRTGEGKTLTATLPCYLNALTGKGVHVVTVNDYLARRDAETNRPLFEFLGMTVGVNVPGLSPEQKREAYAADVTYATNSELGFDYLRDNLAHTAQERFQRYLHYALVDEVDSILIDEARTPLIISGQAEDSSELYMTVDKLIPDLIKQDKEDSEEYQGEGDFTLDLKTKQAHLTERGQEKVEQWLTEQGLMSAEESLYSPSKISLLHHVYAALRAHTLFERDVDYIVKDGEIVIVDEHTGRTMAGRRWSDGLHQAIEAKEGVRIQSENQTVASITYQNYFRLYEKLAGMTGTADTEAFEFQQIYGLETIVVPTNRPMIRDDRTDVMFENEEYKFNAIIEDIKDCVARNQPVLVGTISIEKSELLSHALKKAGIKHNVLNAKFHAQEAEIVANAGYPGTVTIATNMAGRGTDIVLGGNWKAEIAKLDNPTEAQIEAIHTAWKARHEIVKAAGGLHIIGTERHESRRIDNQLRGRSGRQGDPGSSRFYLSLDDALMRIYLNEGKLNLMRKAFSTAGEAMESKMLTKVIASAQAKVEAHNFDGRKNLLEFDDVANDQRHAIYAQRNTLLDNEDISDTIDVIRADVFNQVIDQYIPPQSLEEMWDVPALEQRLKHDFALDLPLEKWLEEDNHFDEDALRQRVLDAAIEEYKQKESIVGEQTMRSFEKGVMLQTLDELWKEHLSAMDHLRRGIHLRGYAQKDPKQEYKKECFQMFTDMLDALKLSVVTTLSRVQVRTQEEVEQAERQRQEMAKRETASMQYNADEDSGEENTRRVGRNEPCPCGSGKKYKHCHGSKAKY.

ATP is bound by residues Gln87, 105–109, and Asp512; that span reads GEGKT. Residues 833-852 show a composition bias toward basic and acidic residues; that stretch reads TQEEVEQAERQRQEMAKRET. The tract at residues 833 to 895 is disordered; sequence TQEEVEQAER…KHCHGSKAKY (63 aa). Cys877, Cys879, Cys888, and His889 together coordinate Zn(2+). Over residues 883 to 895 the composition is skewed to basic residues; sequence KKYKHCHGSKAKY.

It belongs to the SecA family. As to quaternary structure, monomer and homodimer. Part of the essential Sec protein translocation apparatus which comprises SecA, SecYEG and auxiliary proteins SecDF-YajC and YidC. Zn(2+) is required as a cofactor.

It is found in the cell inner membrane. The protein resides in the cytoplasm. It carries out the reaction ATP + H2O + cellular proteinSide 1 = ADP + phosphate + cellular proteinSide 2.. Part of the Sec protein translocase complex. Interacts with the SecYEG preprotein conducting channel. Has a central role in coupling the hydrolysis of ATP to the transfer of proteins into and across the cell membrane, serving both as a receptor for the preprotein-SecB complex and as an ATP-driven molecular motor driving the stepwise translocation of polypeptide chains across the membrane. This chain is Protein translocase subunit SecA, found in Pasteurella multocida (strain Pm70).